An 86-amino-acid chain; its full sequence is Mu-theraphotoxin-Cg2a 3 (86 aa).

An N-terminal signal peptide occupies residues 1-21 (MKVSVVITLAVLGVMFVWASA). Residues 22 to 50 (AELKERGSDQRDSPAWIKSMERIFQSEER) constitute a propeptide that is removed on maturation. Cystine bridges form between cysteine 52/cysteine 66, cysteine 59/cysteine 71, and cysteine 65/cysteine 78. The residue at position 84 (phenylalanine 84) is a Phenylalanine amide.

Belongs to the neurotoxin 10 (Hwtx-1) family. 37 (Jztx-31) subfamily. Expressed by the venom gland.

The protein localises to the secreted. Functionally, inhibits both peak current and fast inactivation of voltage-gated sodium channels (Nav) channels. Inhibits the inactivation of Nav on DRG neurons (EC(50)=1.77 uM) and peak current of cardiac myocytes (IC(50)=0.90 uM). This Chilobrachys guangxiensis (Chinese earth tiger tarantula) protein is Mu-theraphotoxin-Cg2a 3.